Consider the following 235-residue polypeptide: Mediator of RNA polymerase II transcription subunit 29 (235 aa).

Low complexity predominate over residues 1-14; sequence MMNQMGMMMQQQGV. Positions 1–54 are disordered; sequence MMNQMGMMMQQQGVGVPGGPGGVGGVGMPGPGGVGVAPGMMQSPQMQQAQQQQV. The span at 15-36 shows a compositional bias: gly residues; sequence GVPGGPGGVGGVGMPGPGGVGV. Positions 37 to 54 are enriched in low complexity; the sequence is APGMMQSPQMQQAQQQQV.

Belongs to the Mediator complex subunit 29 family. Component of the Mediator complex.

Its subcellular location is the nucleus. In terms of biological role, component of the Mediator complex, a coactivator involved in the regulated transcription of nearly all RNA polymerase II-dependent genes. Mediator functions as a bridge to convey information from gene-specific regulatory proteins to the basal RNA polymerase II transcription machinery. Mediator is recruited to promoters by direct interactions with regulatory proteins and serves as a scaffold for the assembly of a functional preinitiation complex with RNA polymerase II and the general transcription factors. The protein is Mediator of RNA polymerase II transcription subunit 29 (ix) of Anopheles gambiae (African malaria mosquito).